A 688-amino-acid chain; its full sequence is DNA ligase (688 aa).

NAD(+) is bound by residues 51–55 (DSEYD), 100–101 (SL), and E129. K131 serves as the catalytic N6-AMP-lysine intermediate. NAD(+) is bound by residues R152, E189, K308, and K332. Zn(2+)-binding residues include C426, C429, C444, and C450. The 80-residue stretch at 609 to 688 (ADEQPLKGQT…DELLALLANS (80 aa)) folds into the BRCT domain.

It belongs to the NAD-dependent DNA ligase family. LigA subfamily. The cofactor is Mg(2+). Requires Mn(2+) as cofactor.

It catalyses the reaction NAD(+) + (deoxyribonucleotide)n-3'-hydroxyl + 5'-phospho-(deoxyribonucleotide)m = (deoxyribonucleotide)n+m + AMP + beta-nicotinamide D-nucleotide.. In terms of biological role, DNA ligase that catalyzes the formation of phosphodiester linkages between 5'-phosphoryl and 3'-hydroxyl groups in double-stranded DNA using NAD as a coenzyme and as the energy source for the reaction. It is essential for DNA replication and repair of damaged DNA. This chain is DNA ligase, found in Shewanella sp. (strain MR-4).